The sequence spans 22 residues: Myofibril-bound serine protease (22 aa).

Belongs to the peptidase S1 family. In terms of tissue distribution, detected in muscle (at protein level).

It is found in the cytoplasm. Inhibited by the serine protease inhibitors, antipain, aprotinin, DFP, leupeptin, STI and TLCK, and by the cysteine proteinase inhibitors DTNB and to a lesser extent E-64. Not inhibited by the metalloproteinase inhibitor EDTA. Serine protease that selectively cleaves Arg-|-Xaa bonds. The chain is Myofibril-bound serine protease from Cyprinus carpio (Common carp).